Consider the following 687-residue polypeptide: Fork-head transcriptional regulator 2 (687 aa).

Positions 1–23 are disordered; the sequence is MSAQFITPKKRPHSPLDSNELLP. Residues 82-146 form the FHA domain; that stretch reads VSIGRNIELS…NGARIDGQKV (65 aa). Residues 226-241 are compositionally biased toward polar residues; it reads SPSSISANSLQSNLDQ. Residues 226 to 246 form a disordered region; it reads SPSSISANSLQSNLDQDLSKE. Residues 252–350 constitute a DNA-binding region (fork-head); it reads KPPYSYATMI…SDGTISKTRR (99 aa). Disordered regions lie at residues 385 to 449, 472 to 569, and 584 to 687; these read AASI…RYTP, QLGR…IGLN, and PERG…MIDS. Over residues 389-410 the composition is skewed to low complexity; the sequence is PQQQKQQQQQQKRPPQQQNSQP. Residues 411-442 are compositionally biased toward polar residues; it reads HLSQPHYTIPSNPMQTNSMGYIPQSNIYNMSN. Over residues 472 to 490 the composition is skewed to low complexity; the sequence is QLGRPQGQLGQPMMQPQQQ. Positions 491–540 are enriched in polar residues; sequence SYTSSNIKTEPSSPKRNPSISNNTPKMAKGTVSTESHSRSTSYTTTQLHE. 2 stretches are compositionally biased toward low complexity: residues 542–563 and 589–624; these read SNFN…TTTN and KGNP…PNTN. The segment covering 625–659 has biased composition (polar residues); sequence QSSPAFWNFVQFSTPNGQSPVRKSSEEVGNNSPTL. The Nuclear localization signal signature appears at 663-670; that stretch reads IKREREND.

It localises to the nucleus. Its function is as follows. Transcription factor required for the morphogenesis of true hyphal as well as yeast cells. Contributes to virulence. This chain is Fork-head transcriptional regulator 2 (FKH2), found in Candida albicans (strain SC5314 / ATCC MYA-2876) (Yeast).